We begin with the raw amino-acid sequence, 421 residues long: Synaptotagmin-1 (421 aa).

The Vesicular portion of the chain corresponds to 1–57 (MVSASHPEALAAPVTTVATLVPHNATEPASPGEGKEDAFSKLKQKFMNELHKIPLPP). The N-linked (GlcNAc...) asparagine glycan is linked to asparagine 24. A helical membrane pass occupies residues 58 to 79 (WALIAIAIVAVLLVVTCCFCVC). S-palmitoyl cysteine attachment occurs at residues cysteine 74, cysteine 75, cysteine 77, cysteine 79, and cysteine 82. The Cytoplasmic segment spans residues 80 to 421 (KKCLFKKKNK…EVDAMLAVKK (342 aa)). The disordered stretch occupies residues 112–141 (TMKDQALKDDDAETGLTDGEEKEEPKEEEK). Positions 121–133 (DDAETGLTDGEEK) are enriched in acidic residues. Residue threonine 128 is modified to Phosphothreonine. The interval 135-381 (EPKEEEKLGK…AIGKVFVGYN (247 aa)) is phospholipid binding. Residues 141 to 260 (KLGKLQYSLD…DFGHVTEEWR (120 aa)) form the C2 1 domain. 3 residues coordinate Ca(2+): leucine 171, aspartate 172, and aspartate 178. Tyrosine 229 is subject to Phosphotyrosine. Residues aspartate 230, phenylalanine 231, aspartate 232, serine 235, lysine 236, and aspartate 238 each coordinate Ca(2+). Serine 264 is modified (phosphoserine). The C2 2 domain occupies 272-405 (KLGDICFSLR…NPRRPIAQWH (134 aa)). 2 residues coordinate Ca(2+): aspartate 303 and aspartate 309. A phosphoserine mark is found at serine 342 and serine 344. Aspartate 363, aspartate 365, and aspartate 371 together coordinate Ca(2+).

This sequence belongs to the synaptotagmin family. Homotetramer. Heterodimer; heterodimerizes with SYT2 in presence of calcium. Interacts with SCAMP5. Interacts with STON2. Forms a complex with SV2B, syntaxin 1 and SNAP25. Interacts with SV2A, SV2B and SV2C. Interacts with RIMS1. Interacts with PRRT2. Interacts with DNAJC5 in a phosphorylation-dependent manner. Interacts (via N-terminus) with RAB3A. Interacts with SYT12. Interacts with calmodulin. Interacts with DNM1 (via C-terminal proline-rich domain (PRD)); this interaction facilitates vesicle fission during clathrin-mediated endocytosis (CME). In terms of assembly, (Microbial infection) Interacts with C.botulinum neurotoxin type B (BoNT/B, botB). Has lower affinity for BoNT/B than Syt2; mutating its residues to match those in Syt2 increases its affinity. As to quaternary structure, (Microbial infection) Interacts with C.botulinum neurotoxin type G (BoNT/G, botG). Ca(2+) is required as a cofactor. Glycosylated. As to expression, expressed in the brain (at protein level). Predominantly expressed in rostral, phylogenetically younger brain regions, and in some endocrine tissues.

It localises to the cytoplasmic vesicle. Its subcellular location is the secretory vesicle membrane. It is found in the secretory vesicle. The protein localises to the synaptic vesicle membrane. The protein resides in the chromaffin granule membrane. It localises to the cytoplasm. In terms of biological role, calcium sensor that participates in triggering neurotransmitter release at the synapse. May have a regulatory role in the membrane interactions during trafficking of synaptic vesicles at the active zone of the synapse. It binds acidic phospholipids with a specificity that requires the presence of both an acidic head group and a diacyl backbone. A Ca(2+)-dependent interaction between synaptotagmin and putative receptors for activated protein kinase C has also been reported. It can bind to at least three additional proteins in a Ca(2+)-independent manner; these are neurexins, syntaxin and AP2. Plays a role in dendrite formation by melanocytes. Functionally, (Microbial infection) Receptor for C.botulinum neurotoxin type B (BoNT/B, botB); interaction is improved in the presence of gangliosides. BoNT/B toxin binds to the membrane proximal vesicular domain of Syt1 (residues 32-51). (Microbial infection) Receptor for C.botulinum neurotoxin type G (BoNT/G, botG); unlike the case with BoNT/B, interaction is not improved in the presence of gangliosides. BoNT/G toxin binds to the vesicular domain of Syt1 (residues 32-53). In Rattus norvegicus (Rat), this protein is Synaptotagmin-1.